Reading from the N-terminus, the 248-residue chain is Pulmonary surfactant-associated protein A1 (248 aa).

The N-terminal stretch at 1 to 20 (MWLCPLALNLILMAASGAVC) is a signal peptide. Positions 28–100 (GSPGIPGTPG…PGERGPPGLP (73 aa)) constitute a Collagen-like domain. A 4-hydroxyproline mark is found at Pro30, Pro33, Pro36, Pro42, Pro54, Pro57, Pro63, Pro67, and Pro70. The tract at residues 31 to 101 (GIPGTPGSHG…GERGPPGLPA (71 aa)) is disordered. Over residues 42–51 (PGRDGRDGLK) the composition is skewed to basic and acidic residues. The span at 54-70 (PGPPGPMGPPGEMPCPP) shows a compositional bias: pro residues. One can recognise a C-type lectin domain in the interval 132 to 248 (MTVGEKVFSS…LYSRLTICEF (117 aa)). Cystine bridges form between Cys155-Cys246 and Cys224-Cys238. Residue Asn207 is glycosylated (N-linked (GlcNAc...) asparagine).

Belongs to the SFTPA family. In terms of assembly, oligomeric complex of 6 set of homotrimers. Interacts with CD93. As to quaternary structure, (Microbial infection) Binds M.bovis cell surface protein Apa via its glycosylated sites; probably also recognizes other bacterial moieties. (Microbial infection) Binds to the S.aureus extracellular adherence protein, Eap, thereby enhancing phagocytosis and killing of S.aureus by alveolar macrophages. In terms of assembly, (Microbial infection) Interacts with M.pneumoniae CARDS toxin; CARDS probably uses this protein as a receptor. N-acetylated.

The protein resides in the secreted. The protein localises to the extracellular space. It localises to the extracellular matrix. Its subcellular location is the surface film. In presence of calcium ions, it binds to surfactant phospholipids and contributes to lower the surface tension at the air-liquid interface in the alveoli of the mammalian lung and is essential for normal respiration. Enhances the expression of MYO18A/SP-R210 on alveolar macrophages. In terms of biological role, (Microbial infection) Recognition of M.tuberculosis by dendritic cells may occur partially via this molecule. Can recognize, bind, and opsonize pathogens to enhance their elimination by alveolar macrophages. Functionally, (Microbial infection) Binds M.pneumoniae CARDS toxin, serves as one receptor for this pathogen. When SFTPA1 is down-regulated by siRNA, less toxin binds to human cells and less vacuolization (a symptom of M.pneumoniae infection) is seen. The sequence is that of Pulmonary surfactant-associated protein A1 (SFTPA1) from Homo sapiens (Human).